The primary structure comprises 189 residues: uncharacterized protein (189 aa).

This sequence to M.jannaschii MJ1461.

This is an uncharacterized protein from Methanocaldococcus jannaschii (strain ATCC 43067 / DSM 2661 / JAL-1 / JCM 10045 / NBRC 100440) (Methanococcus jannaschii).